The sequence spans 343 residues: Probable dual-specificity RNA methyltransferase RlmN (343 aa).

Glu-94 serves as the catalytic Proton acceptor. One can recognise a Radical SAM core domain in the interval 100 to 330 (YDSRVTVCVS…ATVRMSMGSD (231 aa)). A disulfide bridge connects residues Cys-107 and Cys-335. 3 residues coordinate [4Fe-4S] cluster: Cys-114, Cys-118, and Cys-121. Residues 161–162 (GE), Ser-193, 216–218 (SLH), and Asn-292 each bind S-adenosyl-L-methionine. Residue Cys-335 is the S-methylcysteine intermediate of the active site.

This sequence belongs to the radical SAM superfamily. RlmN family. It depends on [4Fe-4S] cluster as a cofactor.

It localises to the cytoplasm. The enzyme catalyses adenosine(2503) in 23S rRNA + 2 reduced [2Fe-2S]-[ferredoxin] + 2 S-adenosyl-L-methionine = 2-methyladenosine(2503) in 23S rRNA + 5'-deoxyadenosine + L-methionine + 2 oxidized [2Fe-2S]-[ferredoxin] + S-adenosyl-L-homocysteine. It catalyses the reaction adenosine(37) in tRNA + 2 reduced [2Fe-2S]-[ferredoxin] + 2 S-adenosyl-L-methionine = 2-methyladenosine(37) in tRNA + 5'-deoxyadenosine + L-methionine + 2 oxidized [2Fe-2S]-[ferredoxin] + S-adenosyl-L-homocysteine. Functionally, specifically methylates position 2 of adenine 2503 in 23S rRNA and position 2 of adenine 37 in tRNAs. The polypeptide is Probable dual-specificity RNA methyltransferase RlmN (Clostridioides difficile (strain 630) (Peptoclostridium difficile)).